The sequence spans 222 residues: Octanoyltransferase (222 aa).

Residues 32–207 enclose the BPL/LPL catalytic domain; it reads RDRPDVLMLL…AFARVFGVQC (176 aa). Residues 72–79, 139–141, and 152–154 contribute to the substrate site; these read RGGEVTYH, ALG, and GFA. The active-site Acyl-thioester intermediate is Cys-170.

This sequence belongs to the LipB family.

The protein localises to the cytoplasm. The enzyme catalyses octanoyl-[ACP] + L-lysyl-[protein] = N(6)-octanoyl-L-lysyl-[protein] + holo-[ACP] + H(+). It participates in protein modification; protein lipoylation via endogenous pathway; protein N(6)-(lipoyl)lysine from octanoyl-[acyl-carrier-protein]: step 1/2. Catalyzes the transfer of endogenously produced octanoic acid from octanoyl-acyl-carrier-protein onto the lipoyl domains of lipoate-dependent enzymes. Lipoyl-ACP can also act as a substrate although octanoyl-ACP is likely to be the physiological substrate. The sequence is that of Octanoyltransferase from Gloeobacter violaceus (strain ATCC 29082 / PCC 7421).